A 555-amino-acid chain; its full sequence is Connector enhancer of kinase suppressor of ras 3 (555 aa).

An SAM domain is found at 7 to 72; sequence WSPKQVVDWT…LEAVDLLCAL (66 aa). The region spanning 80–174 is the CRIC domain; that stretch reads NMKNLVLKLR…TTVQKDCFVA (95 aa). The region spanning 211–293 is the PDZ domain; that stretch reads EVHLPNIKPG…GVVLLLKKRP (83 aa). 3 disordered regions span residues 309–334, 347–390, and 517–537; these read WKPPLVQTSPPPATTQSPESTMDTSL, PPPP…FLDQ, and IPFQEEGTKKKSGSSATKSSS. The 222-residue stretch at 325–546 folds into the DUF1170 domain; it reads SPESTMDTSL…STEPSLLVSW (222 aa). Residues serine 381 and serine 383 each carry the phosphoserine modification.

It belongs to the CNKSR family. Interacts with epithelial sodium channel ENaC. Interacts directly with SCNN1A (ENaC subunit alpha) and SCNN1B (ENaC subunit beta) C-terminal tails. Interacts with ENaC regulatory proteins NEDD4L, RAF1 and SGK1.

Its subcellular location is the cytoplasm. The protein localises to the apical cell membrane. Functionally, involved in transepithelial sodium transport. Regulates aldosterone-induced and epithelial sodium channel (ENaC)-mediated sodium transport through regulation of ENaC cell surface expression. Acts as a scaffold protein coordinating the assembly of an ENaC-regulatory complex (ERC). The sequence is that of Connector enhancer of kinase suppressor of ras 3 (CNKSR3) from Homo sapiens (Human).